We begin with the raw amino-acid sequence, 169 residues long: Allophycocyanin subunit beta-18 (169 aa).

Asn-72 is subject to N4-methylasparagine. (2R,3E)-phycocyanobilin is bound at residue Cys-82.

The protein belongs to the phycobiliprotein family. As to quaternary structure, heterodimer of ApcE and this beta chain. In terms of processing, contains one covalently linked bilin chromophore. The chromophore is added by phycocyanobilin lyase CpcS 1.

The protein localises to the cellular thylakoid membrane. Its function is as follows. A variant beta-allophycocyanin (AP) which forms a complex with ApcE, a phycobilisome terminal emitter that influences energy transfer to photosystem II. This Nostoc sp. (strain PCC 7120 / SAG 25.82 / UTEX 2576) protein is Allophycocyanin subunit beta-18 (apcF).